The chain runs to 877 residues: DNA mismatch repair protein MutS (877 aa).

G630–S637 lines the ATP pocket.

The protein belongs to the DNA mismatch repair MutS family.

Functionally, this protein is involved in the repair of mismatches in DNA. It is possible that it carries out the mismatch recognition step. This protein has a weak ATPase activity. The polypeptide is DNA mismatch repair protein MutS (Ruegeria pomeroyi (strain ATCC 700808 / DSM 15171 / DSS-3) (Silicibacter pomeroyi)).